A 604-amino-acid polypeptide reads, in one-letter code: Vacuolar protein sorting-associated protein 64 (604 aa).

The segment at methionine 1–glutamine 89 is disordered. Over methionine 1 to arginine 578 the chain is Cytoplasmic. The span at aspartate 22–glutamate 34 shows a compositional bias: polar residues. 2 stretches are compositionally biased toward low complexity: residues arginine 44–asparagine 57 and serine 77–glutamine 89. Residues leucine 185–isoleucine 257 form the FHA domain. A coiled-coil region spans residues asparagine 404–leucine 563. Positions isoleucine 539–aspartate 561 are disordered. Residues lysine 548–glutamate 560 are compositionally biased toward basic and acidic residues. A helical; Anchor for type IV membrane protein transmembrane segment spans residues valine 579–alanine 598. Residues valine 599–glutamine 604 are Lumenal-facing.

Component of a complex at least composed of FAR3, FAR7, FAR8, FAR10, FAR11 and VPS64.

It localises to the endoplasmic reticulum membrane. Participates in the control of the reentry into the cell cycle following pheromone treatment. Involved in vacuolar protein sorting. This Saccharomyces cerevisiae (strain ATCC 204508 / S288c) (Baker's yeast) protein is Vacuolar protein sorting-associated protein 64 (VPS64).